The following is a 362-amino-acid chain: UDP-N-acetylglucosamine--N-acetylmuramyl-(pentapeptide) pyrophosphoryl-undecaprenol N-acetylglucosamine transferase (362 aa).

UDP-N-acetyl-alpha-D-glucosamine contacts are provided by residues 15–17, N127, R165, S191, I247, 266–271, and Q292; these read TGG and ALTVSE.

The protein belongs to the glycosyltransferase 28 family. MurG subfamily.

The protein resides in the cell inner membrane. It catalyses the reaction di-trans,octa-cis-undecaprenyl diphospho-N-acetyl-alpha-D-muramoyl-L-alanyl-D-glutamyl-meso-2,6-diaminopimeloyl-D-alanyl-D-alanine + UDP-N-acetyl-alpha-D-glucosamine = di-trans,octa-cis-undecaprenyl diphospho-[N-acetyl-alpha-D-glucosaminyl-(1-&gt;4)]-N-acetyl-alpha-D-muramoyl-L-alanyl-D-glutamyl-meso-2,6-diaminopimeloyl-D-alanyl-D-alanine + UDP + H(+). It functions in the pathway cell wall biogenesis; peptidoglycan biosynthesis. Its function is as follows. Cell wall formation. Catalyzes the transfer of a GlcNAc subunit on undecaprenyl-pyrophosphoryl-MurNAc-pentapeptide (lipid intermediate I) to form undecaprenyl-pyrophosphoryl-MurNAc-(pentapeptide)GlcNAc (lipid intermediate II). This Shewanella baltica (strain OS155 / ATCC BAA-1091) protein is UDP-N-acetylglucosamine--N-acetylmuramyl-(pentapeptide) pyrophosphoryl-undecaprenol N-acetylglucosamine transferase.